Here is a 349-residue protein sequence, read N- to C-terminus: UDP-N-acetylenolpyruvoylglucosamine reductase (349 aa).

In terms of domain architecture, FAD-binding PCMH-type spans 24–197 (FGIDATARFA…VAVTFRLPKR (174 aa)). The active site involves Arg173. Ser249 acts as the Proton donor in catalysis. Glu345 is an active-site residue.

The protein belongs to the MurB family. The cofactor is FAD.

The protein localises to the cytoplasm. It carries out the reaction UDP-N-acetyl-alpha-D-muramate + NADP(+) = UDP-N-acetyl-3-O-(1-carboxyvinyl)-alpha-D-glucosamine + NADPH + H(+). It participates in cell wall biogenesis; peptidoglycan biosynthesis. Cell wall formation. The chain is UDP-N-acetylenolpyruvoylglucosamine reductase from Burkholderia ambifaria (strain MC40-6).